Reading from the N-terminus, the 303-residue chain is N-acetyl-D-glucosamine kinase (303 aa).

ATP contacts are provided by residues 4–11 and 133–140; these read GFDIGGTK and GVGGGLVL. His-157, Cys-177, Cys-179, and Cys-184 together coordinate Zn(2+).

The protein belongs to the ROK (NagC/XylR) family. NagK subfamily.

It carries out the reaction N-acetyl-D-glucosamine + ATP = N-acetyl-D-glucosamine 6-phosphate + ADP + H(+). Its pathway is cell wall biogenesis; peptidoglycan recycling. Functionally, catalyzes the phosphorylation of N-acetyl-D-glucosamine (GlcNAc) derived from cell-wall degradation, yielding GlcNAc-6-P. This Salmonella arizonae (strain ATCC BAA-731 / CDC346-86 / RSK2980) protein is N-acetyl-D-glucosamine kinase.